Reading from the N-terminus, the 250-residue chain is ATP synthase subunit b 2 (250 aa).

A helical transmembrane segment spans residues 2-22 (LIDWFTVFAQILNFVILLGLL).

The protein belongs to the ATPase B chain family. As to quaternary structure, F-type ATPases have 2 components, F(1) - the catalytic core - and F(0) - the membrane proton channel. F(1) has five subunits: alpha(3), beta(3), gamma(1), delta(1), epsilon(1). F(0) has four main subunits: a(1), b(1), b'(1) and c(10-14). The alpha and beta chains form an alternating ring which encloses part of the gamma chain. F(1) is attached to F(0) by a central stalk formed by the gamma and epsilon chains, while a peripheral stalk is formed by the delta, b and b' chains.

The protein localises to the cellular thylakoid membrane. F(1)F(0) ATP synthase produces ATP from ADP in the presence of a proton or sodium gradient. F-type ATPases consist of two structural domains, F(1) containing the extramembraneous catalytic core and F(0) containing the membrane proton channel, linked together by a central stalk and a peripheral stalk. During catalysis, ATP synthesis in the catalytic domain of F(1) is coupled via a rotary mechanism of the central stalk subunits to proton translocation. In terms of biological role, component of the F(0) channel, it forms part of the peripheral stalk, linking F(1) to F(0). This Picosynechococcus sp. (strain ATCC 27264 / PCC 7002 / PR-6) (Agmenellum quadruplicatum) protein is ATP synthase subunit b 2.